Here is a 304-residue protein sequence, read N- to C-terminus: N-carbamoyl-D-amino acid hydrolase (304 aa).

The CN hydrolase domain maps to 5 to 276 (MILAVGQQGP…DEVITAAVDL (272 aa)). Catalysis depends on residues Glu47, Lys127, and Cys172.

The enzyme catalyses an N-carbamoyl-D-amino acid + H2O + 2 H(+) = a D-alpha-amino acid + NH4(+) + CO2. Its function is as follows. The enzyme catalyzes the hydrolysis of N-carbamoyl-D-amino acids to the corresponding which are useful intermediates in the preparation of beta-lactam antibiotics. Industrial production of beta-lactam antibiotics is now being developed using this enzyme. This chain is N-carbamoyl-D-amino acid hydrolase, found in Agrobacterium sp. (strain KNK712).